A 315-amino-acid polypeptide reads, in one-letter code: Secreted mono- and diacylglycerol lipase LIP2 (315 aa).

The first 21 residues, 1–21 (MACFRVILYLSVIFFVQCVFA), serve as a signal peptide directing secretion. Cysteine 68 and cysteine 308 are joined by a disulfide. An N-linked (GlcNAc...) asparagine glycan is attached at asparagine 74. Serine 182 (nucleophile) is an active-site residue. Aspartate 240 is an active-site residue. An N-linked (GlcNAc...) asparagine glycan is attached at asparagine 265. The active site involves histidine 292.

It belongs to the AB hydrolase superfamily. Lipase family. Class 3 subfamily.

The protein localises to the secreted. It carries out the reaction a monoacylglycerol + H2O = glycerol + a fatty acid + H(+). It catalyses the reaction a diacylglycerol + H2O = a monoacylglycerol + a fatty acid + H(+). Secreted lipase involved in Dandruff and seborrheic dermatitis (D/SD) probably via lipase-mediated breakdown of sebaceous lipids and release of irritating free fatty acids. Shows activity against monoglyceride and diglyceride substrates and generates free oleic acid from the substrates mono- and diolein. Able to cleave the oleic acid from both the 1 and the 2 position of the glycerol backbone as 1,2 isomers of diolein were converted into oleic acid and glycerol. Due to an absence of fatty acid synthase genes in Malassezia species, secretory lipases are essential for the yeast to generate free fatty acids from degradation of sebum and assimilate them as lipid sources for growth. Plays an essential role at the pathogen-host interface during disease progression. Also performs the reverse reaction to build diacylglycerols from monoacylglycerols. The chain is Secreted mono- and diacylglycerol lipase LIP2 from Malassezia restricta (Seborrheic dermatitis infection agent).